A 311-amino-acid polypeptide reads, in one-letter code: Vomeronasal type-1 receptor 105 (311 aa).

Residues 1 to 17 (MMNKNSRLYTDSNIRNT) are Extracellular-facing. Residues 18 to 38 (FFAEIGIGVSANSLLLLFNIF) traverse the membrane as a helical segment. At 39 to 50 (KLICGQRSRLTD) the chain is on the cytoplasmic side. A helical transmembrane segment spans residues 51 to 71 (LPIGLLSLINLLMLLMTAFIA). Topologically, residues 72 to 94 (TDTFISWRGWDDIICKSLLYLYR) are extracellular. A disulfide bridge links Cys86 with Cys173. A helical transmembrane segment spans residues 95 to 115 (TFRGLSLCTSCLLSVLQAIIL). Over 116–135 (SPRSSCLAKFKHKPSHHISC) the chain is Cytoplasmic. A helical membrane pass occupies residues 136-156 (AILSLSVLYMFISSHLLVSII). Residues 157–188 (ATPNLTTNDFIHVTQWCSILPMSYLMQSMFST) lie on the Extracellular side of the membrane. Asn160 carries N-linked (GlcNAc...) asparagine glycosylation. A helical transmembrane segment spans residues 189–209 (LLAIRDVFLISLMVLSTWYMV). The Cytoplasmic portion of the chain corresponds to 210–239 (ALLCRHRKQTRHLQGTSLSPKASPEQRATR). The chain crosses the membrane as a helical span at residues 240–260 (SILMLMSLFVLMSVFDSIVCS). Over 261-271 (SRTMYLNDPIS) the chain is Extracellular. Residues 272 to 292 (YSYQLFMVHIYATVSPFVFIV) traverse the membrane as a helical segment. At 293 to 311 (TEKHIVNSLRSMCVKVMNV) the chain is on the cytoplasmic side.

It belongs to the G-protein coupled receptor 1 family. As to expression, expressed in 1-4% of neurons of the vomeronasal organ. Only one pheromone receptor gene may be expressed in a particular neuron. Not expressed in the main olfactory epithelium.

It is found in the cell membrane. In terms of biological role, putative pheromone receptor implicated in the regulation of social as well as reproductive behavior. This Rattus norvegicus (Rat) protein is Vomeronasal type-1 receptor 105 (Vom1r105).